Consider the following 80-residue polypeptide: Protein CEBPZOS (80 aa).

A helical transmembrane segment spans residues 15-31 (GVLAAELVGVAGAYCLF).

The protein resides in the mitochondrion membrane. The protein is Protein CEBPZOS of Mus musculus (Mouse).